The following is a 153-amino-acid chain: Large ribosomal subunit protein uL15 (153 aa).

The disordered stretch occupies residues 21-41 (RGIGSGKGKTGGRGIKGQKSR). Gly residues predominate over residues 23–35 (IGSGKGKTGGRGI).

It belongs to the universal ribosomal protein uL15 family. Part of the 50S ribosomal subunit.

In terms of biological role, binds to the 23S rRNA. The chain is Large ribosomal subunit protein uL15 from Rickettsia felis (strain ATCC VR-1525 / URRWXCal2) (Rickettsia azadi).